A 49-amino-acid polypeptide reads, in one-letter code: Large ribosomal subunit protein eL40 (49 aa).

This sequence belongs to the eukaryotic ribosomal protein eL40 family.

This Methanopyrus kandleri (strain AV19 / DSM 6324 / JCM 9639 / NBRC 100938) protein is Large ribosomal subunit protein eL40.